Here is a 212-residue protein sequence, read N- to C-terminus: Ropporin-1 (212 aa).

An RIIa domain is found at 12-49 (PELPKMLKEFAKAAIRAQPQDLIQWGADYFEALSRGET). Serine 56 is modified (phosphoserine). Residues 209-212 (VWLE) are interaction with RHPN1.

Belongs to the ropporin family. In terms of assembly, homodimer. Interacts with AKAP3. May interact with SPA17. Interacts with RHPN1. Interacts with FSCB; the interaction increases upon spermatozoa capacitation conditions. Interacts with CFAP61. Sumoylated, sumoylation decreases upon spermatozoa capacitation conditions.

Its subcellular location is the cell projection. It is found in the cilium. The protein localises to the flagellum. Important for male fertility. With ROPN1L, involved in fibrous sheath integrity and sperm motility, plays a role in PKA-dependent signaling processes required for spermatozoa capacitation. In Macaca fascicularis (Crab-eating macaque), this protein is Ropporin-1 (ROPN1).